Consider the following 206-residue polypeptide: Uridine kinase (206 aa).

ATP is bound at residue 11-18; that stretch reads GGTGSGKS.

The protein belongs to the uridine kinase family.

Its subcellular location is the cytoplasm. It catalyses the reaction uridine + ATP = UMP + ADP + H(+). It carries out the reaction cytidine + ATP = CMP + ADP + H(+). Its pathway is pyrimidine metabolism; CTP biosynthesis via salvage pathway; CTP from cytidine: step 1/3. The protein operates within pyrimidine metabolism; UMP biosynthesis via salvage pathway; UMP from uridine: step 1/1. This Clostridium botulinum (strain Kyoto / Type A2) protein is Uridine kinase.